The chain runs to 570 residues: Sulfite reductase [NADPH] hemoprotein beta-component (570 aa).

Positions 434, 440, 479, and 483 each coordinate [4Fe-4S] cluster. Cys483 contacts siroheme.

Belongs to the nitrite and sulfite reductase 4Fe-4S domain family. As to quaternary structure, alpha(8)-beta(8). The alpha component is a flavoprotein, the beta component is a hemoprotein. Siroheme is required as a cofactor. It depends on [4Fe-4S] cluster as a cofactor.

It carries out the reaction hydrogen sulfide + 3 NADP(+) + 3 H2O = sulfite + 3 NADPH + 4 H(+). The protein operates within sulfur metabolism; hydrogen sulfide biosynthesis; hydrogen sulfide from sulfite (NADPH route): step 1/1. Functionally, component of the sulfite reductase complex that catalyzes the 6-electron reduction of sulfite to sulfide. This is one of several activities required for the biosynthesis of L-cysteine from sulfate. This chain is Sulfite reductase [NADPH] hemoprotein beta-component, found in Cronobacter sakazakii (strain ATCC BAA-894) (Enterobacter sakazakii).